Reading from the N-terminus, the 252-residue chain is Imidazole glycerol phosphate synthase subunit HisF (252 aa).

Active-site residues include Asp11 and Asp130.

Belongs to the HisA/HisF family. In terms of assembly, heterodimer of HisH and HisF.

The protein resides in the cytoplasm. The catalysed reaction is 5-[(5-phospho-1-deoxy-D-ribulos-1-ylimino)methylamino]-1-(5-phospho-beta-D-ribosyl)imidazole-4-carboxamide + L-glutamine = D-erythro-1-(imidazol-4-yl)glycerol 3-phosphate + 5-amino-1-(5-phospho-beta-D-ribosyl)imidazole-4-carboxamide + L-glutamate + H(+). It participates in amino-acid biosynthesis; L-histidine biosynthesis; L-histidine from 5-phospho-alpha-D-ribose 1-diphosphate: step 5/9. Its function is as follows. IGPS catalyzes the conversion of PRFAR and glutamine to IGP, AICAR and glutamate. The HisF subunit catalyzes the cyclization activity that produces IGP and AICAR from PRFAR using the ammonia provided by the HisH subunit. This chain is Imidazole glycerol phosphate synthase subunit HisF, found in Thermococcus kodakarensis (strain ATCC BAA-918 / JCM 12380 / KOD1) (Pyrococcus kodakaraensis (strain KOD1)).